The chain runs to 248 residues: Triosephosphate isomerase (248 aa).

Asparagine 9 to lysine 11 is a substrate binding site. The active-site Electrophile is histidine 94. Residue glutamate 166 is the Proton acceptor of the active site. Substrate is bound by residues glycine 172, serine 212, and glycine 233–glycine 234.

The protein belongs to the triosephosphate isomerase family. As to quaternary structure, homodimer.

The protein localises to the cytoplasm. The enzyme catalyses D-glyceraldehyde 3-phosphate = dihydroxyacetone phosphate. It participates in carbohydrate biosynthesis; gluconeogenesis. The protein operates within carbohydrate degradation; glycolysis; D-glyceraldehyde 3-phosphate from glycerone phosphate: step 1/1. Involved in the gluconeogenesis. Catalyzes stereospecifically the conversion of dihydroxyacetone phosphate (DHAP) to D-glyceraldehyde-3-phosphate (G3P). This is Triosephosphate isomerase from Clostridium beijerinckii (strain ATCC 51743 / NCIMB 8052) (Clostridium acetobutylicum).